A 394-amino-acid polypeptide reads, in one-letter code: Large ribosomal subunit protein mL44 (394 aa).

The transit peptide at 1 to 21 directs the protein to the mitochondrion; it reads MFRHVAQNLGSRNTSIQSYRL.

It belongs to the ribonuclease III family. Mitochondrion-specific ribosomal protein mL44 subfamily. Component of the mitochondrial large ribosomal subunit (mt-LSU).

The protein localises to the mitochondrion. Its function is as follows. Component of the mitochondrial ribosome. May have a function in the assembly/stability of nascent mitochondrial polypeptides exiting the ribosome. This is Large ribosomal subunit protein mL44 from Caenorhabditis elegans.